The primary structure comprises 598 residues: Urease subunit alpha (598 aa).

Ni(2+) contacts are provided by His-141, His-143, and Lys-223. Lys-223 is modified (N6-carboxylysine). His-225 contacts substrate. The Ni(2+) site is built by His-252 and His-278. His-326 serves as the catalytic Proton donor. Asp-366 contributes to the Ni(2+) binding site.

It belongs to the metallo-dependent hydrolases superfamily. Urease alpha subunit family. Heterotrimer of UreA (gamma), UreB (beta) and UreC (alpha) subunits. Three heterotrimers associate to form the active enzyme. Ni cation serves as cofactor. In terms of processing, carboxylation allows a single lysine to coordinate two nickel ions.

The protein localises to the cytoplasm. It carries out the reaction urea + 2 H2O + H(+) = hydrogencarbonate + 2 NH4(+). Its pathway is nitrogen metabolism; urea degradation; CO(2) and NH(3) from urea (urease route): step 1/1. The sequence is that of Urease subunit alpha from Ureaplasma parvum serovar 3 (strain ATCC 27815 / 27 / NCTC 11736).